A 359-amino-acid polypeptide reads, in one-letter code: G-protein coupled receptor 15 (359 aa).

Residues 1-33 lie on the Extracellular side of the membrane; sequence MDPEETSVYLDYYYATSPNPDIRETHSHVPYTS. A helical transmembrane segment spans residues 34–54; it reads VFLPVFYTAVFLTGVLGNLVL. Over 55-69 the chain is Cytoplasmic; the sequence is MGALHFKPGSRRLID. The chain crosses the membrane as a helical span at residues 70-90; it reads IFIINLAASDFIFLVTLPLWV. The Extracellular portion of the chain corresponds to 91–120; the sequence is DKEASLGLWRTGSFLCKGSSYMISVNMHCS. A helical membrane pass occupies residues 121–141; that stretch reads VFLLTCMSVDRYLAIVCPVVS. Over 142 to 149 the chain is Cytoplasmic; that stretch reads RKFRRTDC. A helical membrane pass occupies residues 150–170; that stretch reads AYVVCASIWFISCLLGLPTLL. At 171-192 the chain is on the extracellular side; sequence SRELTLIDDKPYCAEKKATPLK. Residues 193–213 traverse the membrane as a helical segment; that stretch reads LIWSLVALIFTFFVPLLNIVT. Topologically, residues 214–239 are cytoplasmic; the sequence is CYCCIARKLCAHYQQSGRHNKKLKKS. A helical membrane pass occupies residues 240–260; it reads IKIILIVVAAFLVSWLPFNTF. Residues 261–283 are Extracellular-facing; sequence KLLAIVSGLQERYFPSAMLQLGM. The helical transmembrane segment at 284-304 threads the bilayer; the sequence is EVSGPLAFANSCVNPFIYYIF. At 305 to 359 the chain is on the cytoplasmic side; that stretch reads DSYIRRAIVHCLCPCLKNYDFGSSTETSDSHLTKALSTFIHAEDFTRRRKRSVSL. S358 is subject to Phosphoserine.

The protein belongs to the G-protein coupled receptor 1 family. As to quaternary structure, interacts with adapter YWHAE; this interaction promotes ER-to-Golgi transport of GPR15. Phosphorylation is necessary for YWHAE binding and efficient surface expression. In terms of processing, O-glycosylated. Sialylated O-glycans in the N-terminal tail inhibits binding of GPR15LG. Post-translationally, sulfation is required for efficient binding of GPR15LG.

The protein localises to the cell membrane. In terms of biological role, g protein-coupled receptor that plays an important role in immune homeostasis. Acts via its natural ligand GPR15LG, a chemokine-like polypeptide strongly expressed in gastrointestinal tissues. GPR15-GPR15LG signaling axis regulates intestinal homeostasis and inflammation through the migration of immune cells. Controls thereby the specific homing of T-cells, particularly FOXP3+ regulatory T-cells (Tregs), to the large intestine lamina propria. Also required for skin localization of thymus-derived dendritic epidermal T-cells. Plays an important role in mediating cytoprotective function as well as angiogenesis of thrombomodulin. Mechanistically, preferentially signals through the Gi/o pathway to inhibit adenylate cyclase activity and activate a phosphatidylinositol-calcium second messenger system that regulates the release of Ca(2+) ions from intracellular stores. This chain is G-protein coupled receptor 15 (GPR15), found in Macaca fascicularis (Crab-eating macaque).